The chain runs to 52 residues: Protein YabQ (52 aa).

Its function is as follows. Identified as a multicopy suppressor of the slow growth phenotype of an rsgA (yjeQ) deletion mutant. The polypeptide is Protein YabQ (yabQ) (Escherichia coli (strain K12)).